The sequence spans 173 residues: Protein tyrosine phosphatase type IVA 1 (173 aa).

One can recognise a Tyrosine-protein phosphatase domain in the interval 8 to 161; it reads APVEVTYKNM…YRPKMRLRFK (154 aa). Cys-49 and Cys-104 are oxidised to a cystine. The active-site Proton donor is Asp-72. An interaction with ATF5 region spans residues 97-132; the sequence is GCCIAVHCVAGLGRAPVLVALALIEGGMKYEDAVQF. The active-site Phosphocysteine intermediate is Cys-104. Position 105 to 110 (105 to 110) interacts with phosphate; that stretch reads VAGLGR. Arg-110 contacts substrate. A Cysteine methyl ester modification is found at Cys-170. The S-farnesyl cysteine moiety is linked to residue Cys-170. Residues 171 to 173 constitute a propeptide, removed in mature form; the sequence is CIQ.

Belongs to the protein-tyrosine phosphatase family. Homotrimer. Interacts with ATF5. Interacts with tubulin. In terms of processing, farnesylated. Farnesylation is required for membrane targeting. Unfarnesylated forms are shifted into the nucleus. As to expression, expressed in bone marrow, lymph nodes, T lymphocytes, spleen, thymus and tonsil. Overexpressed in tumor cell lines.

The protein resides in the cell membrane. It is found in the early endosome. It localises to the endoplasmic reticulum. The protein localises to the cytoplasm. Its subcellular location is the cytoskeleton. The protein resides in the spindle. It is found in the nucleus. The catalysed reaction is O-phospho-L-tyrosyl-[protein] + H2O = L-tyrosyl-[protein] + phosphate. Its activity is regulated as follows. Inhibited by sodium orthovanadate and pentamidine. In terms of biological role, protein tyrosine phosphatase which stimulates progression from G1 into S phase during mitosis. May play a role in the development and maintenance of differentiating epithelial tissues. Enhances cell proliferation, cell motility and invasive activity, and promotes cancer metastasis. The sequence is that of Protein tyrosine phosphatase type IVA 1 (PTP4A1) from Homo sapiens (Human).